The sequence spans 166 residues: Phosphopantetheine adenylyltransferase (166 aa).

S10 serves as a coordination point for substrate. Residues 10 to 11 and H18 contribute to the ATP site; that span reads SF. Substrate-binding residues include K42, A79, and R93. ATP contacts are provided by residues 94 to 96, E104, and 129 to 135; these read GLR and VRPITAT.

Belongs to the bacterial CoaD family. Homohexamer. Requires Mg(2+) as cofactor.

It is found in the cytoplasm. The enzyme catalyses (R)-4'-phosphopantetheine + ATP + H(+) = 3'-dephospho-CoA + diphosphate. The protein operates within cofactor biosynthesis; coenzyme A biosynthesis; CoA from (R)-pantothenate: step 4/5. Reversibly transfers an adenylyl group from ATP to 4'-phosphopantetheine, yielding dephospho-CoA (dPCoA) and pyrophosphate. This is Phosphopantetheine adenylyltransferase from Methylobacterium sp. (strain 4-46).